Here is a 350-residue protein sequence, read N- to C-terminus: MPVLHNRISNDELKAKMLAESEPRTTISFYKYFTIASPQQTRDALYQVFTALDVFGRVYLAYEGINAQISVPQSKVETFRQQLYTFDPALDGLRLNIALEDDGKSFWVLRMKVRDRIVADGIDDPSFDASNVGDYLKAADVNEMLDDPDAVFIDMRNHYEYEVGHFENALEIPADTFREQLPKAVEMLREHADKKIVMYCTGGIRCEKASAWMKHNGFNKVWHIEGGIIEYARRARAQGLPVRFIGKNFVFDERMGERISDEVIAHCHQCGAPCDSHTNCKNDGCHLLFIQCPQCASKFNGCCSEQCCEELALPEEEQRRRRAGRENGNKIFNKSRGRLNSKLSIPDPAE.

One can recognise a Rhodanese domain in the interval 146–240 (DDPDAVFIDM…YARRARAQGL (95 aa)). Cys200 (cysteine persulfide intermediate) is an active-site residue. Over residues 319–328 (RRRRAGRENG) the composition is skewed to basic and acidic residues. The segment at 319 to 350 (RRRRAGRENGNKIFNKSRGRLNSKLSIPDPAE) is disordered.

This sequence belongs to the TrhO family.

It catalyses the reaction uridine(34) in tRNA + AH2 + O2 = 5-hydroxyuridine(34) in tRNA + A + H2O. Catalyzes oxygen-dependent 5-hydroxyuridine (ho5U) modification at position 34 in tRNAs. In Salmonella newport (strain SL254), this protein is tRNA uridine(34) hydroxylase.